We begin with the raw amino-acid sequence, 241 residues long: Queuine tRNA-ribosyltransferase-like protein (241 aa).

The protein belongs to the queuine tRNA-ribosyltransferase family.

This chain is Queuine tRNA-ribosyltransferase-like protein, found in Plasmodium falciparum.